A 98-amino-acid chain; its full sequence is Small ribosomal subunit protein eS24 (98 aa).

The protein belongs to the eukaryotic ribosomal protein eS24 family.

The protein is Small ribosomal subunit protein eS24 of Thermococcus sibiricus (strain DSM 12597 / MM 739).